The following is a 127-amino-acid chain: Fluoride-specific ion channel FluC (127 aa).

A run of 4 helical transmembrane segments spans residues 2 to 22 (LSSL…RWAI), 35 to 55 (LGTL…IAIF), 68 to 88 (LITT…LEVV), and 104 to 124 (LLNL…VVWI). The Na(+) site is built by Gly-75 and Thr-78.

It belongs to the fluoride channel Fluc/FEX (TC 1.A.43) family.

Its subcellular location is the cell inner membrane. The enzyme catalyses fluoride(in) = fluoride(out). With respect to regulation, na(+) is not transported, but it plays an essential structural role and its presence is essential for fluoride channel function. In terms of biological role, fluoride-specific ion channel. Important for reducing fluoride concentration in the cell, thus reducing its toxicity. This chain is Fluoride-specific ion channel FluC, found in Serratia proteamaculans (strain 568).